The following is a 98-amino-acid chain: NADH-ubiquinone oxidoreductase chain 4L (98 aa).

A run of 3 helical transmembrane segments spans residues 2–22 (TLTTMNILLAFFFSLLGTLIF), 29–49 (TLLCLEGMMLSLFIMTTITAL), and 61–81 (ITTLVFAACEAAVGLALLTMV).

This sequence belongs to the complex I subunit 4L family. As to quaternary structure, core subunit of respiratory chain NADH dehydrogenase (Complex I) which is composed of 45 different subunits.

The protein resides in the mitochondrion inner membrane. It carries out the reaction a ubiquinone + NADH + 5 H(+)(in) = a ubiquinol + NAD(+) + 4 H(+)(out). Its function is as follows. Core subunit of the mitochondrial membrane respiratory chain NADH dehydrogenase (Complex I) which catalyzes electron transfer from NADH through the respiratory chain, using ubiquinone as an electron acceptor. Part of the enzyme membrane arm which is embedded in the lipid bilayer and involved in proton translocation. This is NADH-ubiquinone oxidoreductase chain 4L (MT-ND4L) from Oxymycterus rufus (Red hocicudo).